Reading from the N-terminus, the 233-residue chain is Proteasome subunit alpha (233 aa).

This sequence belongs to the peptidase T1A family. The 20S proteasome core is composed of 14 alpha and 14 beta subunits that assemble into four stacked heptameric rings, resulting in a barrel-shaped structure. The two inner rings, each composed of seven catalytic beta subunits, are sandwiched by two outer rings, each composed of seven alpha subunits. The catalytic chamber with the active sites is on the inside of the barrel. Has a gated structure, the ends of the cylinder being occluded by the N-termini of the alpha-subunits. Is capped at one or both ends by the proteasome regulatory ATPase, PAN. Post-translationally, the N-terminus is blocked.

It localises to the cytoplasm. Its activity is regulated as follows. The formation of the proteasomal ATPase PAN-20S proteasome complex, via the docking of the C-termini of PAN into the intersubunit pockets in the alpha-rings, triggers opening of the gate for substrate entry. Interconversion between the open-gate and close-gate conformations leads to a dynamic regulation of the 20S proteasome proteolysis activity. Its function is as follows. Component of the proteasome core, a large protease complex with broad specificity involved in protein degradation. The T.acidophilum proteasome is able to cleave oligopeptides after Tyr, Leu, Phe, and to a lesser extent after Glu and Arg. Thus, displays chymotrypsin-like activity and low level of caspase-like and trypsin-like activities. This chain is Proteasome subunit alpha, found in Thermoplasma acidophilum (strain ATCC 25905 / DSM 1728 / JCM 9062 / NBRC 15155 / AMRC-C165).